Consider the following 106-residue polypeptide: Minor capsid protein VP2 (106 aa).

This sequence belongs to the vesivirus VP2 protein family. Homooligomer. The portal-like structure consists in 12 copies of VP2. Interacts with capsid protein VP1.

It is found in the virion. Its subcellular location is the host cytoplasm. In terms of biological role, minor structural protein that forms a portal-like structure at a unique three-fold axis of symmetry, following binding to the host receptor. The virion attaches to feline junctional adhesion molecule A (F11R). Once attached, the virion is endocytosed. Acidification of the endosome induces conformational change of capsid protein thereby injecting virus genomic RNA into host cytoplasm. The channel formed by VP2 may allow the delivery of the viral genome through the host endosomal membrane. This Feline calicivirus (strain Cat/United States/Urbana/1960) (FCV) protein is Minor capsid protein VP2.